Reading from the N-terminus, the 545-residue chain is Glucose-6-phosphate isomerase (545 aa).

Glu-351 acts as the Proton donor in catalysis. Residues His-382 and Lys-510 contribute to the active site.

Belongs to the GPI family.

The protein resides in the cytoplasm. The catalysed reaction is alpha-D-glucose 6-phosphate = beta-D-fructose 6-phosphate. The protein operates within carbohydrate biosynthesis; gluconeogenesis. It functions in the pathway carbohydrate degradation; glycolysis; D-glyceraldehyde 3-phosphate and glycerone phosphate from D-glucose: step 2/4. Its function is as follows. Catalyzes the reversible isomerization of glucose-6-phosphate to fructose-6-phosphate. The chain is Glucose-6-phosphate isomerase from Helicobacter pylori (strain P12).